We begin with the raw amino-acid sequence, 123 residues long: MKVFIILGAINALLAVGLGAFGAHGLEGKIPDKYLQVWHTGVQYHMYHALGLFVVAFLADKLSGIGSVTTAGWLMFAGIVLFSGSLYILSVTQISILGAITPLGGVAFIISWIMIVVAAVKYL.

4 helical membrane passes run 3–23 (VFII…AFGA), 49–69 (ALGL…GSVT), 71–91 (AGWL…ILSV), and 96–116 (ILGA…IMIV).

Belongs to the UPF0382 family.

Its subcellular location is the cell membrane. This is UPF0382 membrane protein YwdK (ywdK) from Bacillus subtilis (strain 168).